The chain runs to 154 residues: 3-hydroxyacyl-[acyl-carrier-protein] dehydratase FabZ (154 aa).

Residue histidine 54 is part of the active site.

Belongs to the thioester dehydratase family. FabZ subfamily.

The protein localises to the cytoplasm. The enzyme catalyses a (3R)-hydroxyacyl-[ACP] = a (2E)-enoyl-[ACP] + H2O. Involved in unsaturated fatty acids biosynthesis. Catalyzes the dehydration of short chain beta-hydroxyacyl-ACPs and long chain saturated and unsaturated beta-hydroxyacyl-ACPs. The sequence is that of 3-hydroxyacyl-[acyl-carrier-protein] dehydratase FabZ from Chlamydia caviae (strain ATCC VR-813 / DSM 19441 / 03DC25 / GPIC) (Chlamydophila caviae).